The following is a 1037-amino-acid chain: Outer dynein arm-docking complex subunit 2 (1037 aa).

Composition is skewed to basic and acidic residues over residues 316–334 and 376–391; these read EEQQKDNQIFEKPKTEDGH and SSIKDSQEEKQGKLEK. Disordered stretches follow at residues 316–353 and 376–439; these read EEQQKDNQIFEKPKTEDGHSSVAGSEKSKIEKISFGKS and SSIK…ANAD. ARM repeat units follow at residues 477-516, 518-557, 528-570, 615-654, 656-695, 739-778, 821-860, 864-903, 905-944, and 946-985; these read ETCQLAIRDVGGLEVLINLLDTDEVKCKIGSLKILKEISH, PQIRRNIVDLGGLPIMVNILDSPHKSLKCLSAETIANVAK, GGLP…QHGG, HSNKEAIRKAGGIPLLARLLKTSHENMLIPVVGTLQECAS, ENYRAAIKAERIIENLVKNLNSENEQLQEHCAMAIYQCAE, KENVIKFREYKAIETLVGLLTDQPEEVLVNVVGALGECCQ, PESMAIIDRLDGVRLLWSLLKNPHPDVKASAAWALCPCIE, DAGEMVRSFVGGLELVVNLLKSDNKEVLASVCAAITNIAK, QENLAVITDHGVVPLLSKLANTNNDKLRRHLAEAISRCCM, and GRNRVAFGEHKAVAPLVRYLKSNDTNVHRATAQALYQLSE. Residue K545 is modified to N6-methyllysine.

In terms of assembly, component of the outer dynein arm-docking complex along with ODAD1, ODAD3, and ODAD4. Interacts with CFAP61. As to expression, highly expressed in testis. In males, also detected at lower levels in lung, brain, liver and muscle. In females, detected in ovary.

It localises to the cytoplasm. The protein resides in the cytoskeleton. Its subcellular location is the cilium axoneme. It is found in the cilium basal body. Its function is as follows. Component of the outer dynein arm-docking complex (ODA-DC) that mediates outer dynein arms (ODA) binding onto the doublet microtubule. Involved in mediating assembly of both ODAs and their axonemal docking complex onto ciliary microtubules. The protein is Outer dynein arm-docking complex subunit 2 of Mus musculus (Mouse).